The following is a 612-amino-acid chain: Coagulation factor X-activating enzyme heavy chain (612 aa).

A signal peptide spans 1–20; it reads MMQVLLVTISLAVFPYQGSS. Residues 21 to 193 constitute a propeptide, or 194; sequence IILESGNVND…KKASQLVATS (173 aa). Residues 201 to 395 enclose the Peptidase M12B domain; sequence TFIELVIVVD…YKPKCILNPP (195 aa). Glu204 contacts Ca(2+). Asn259 carries N-linked (GlcNAc...) asparagine glycosylation. Position 286 (Asp286) interacts with Ca(2+). 3 cysteine pairs are disulfide-bonded: Cys310–Cys390, Cys350–Cys374, and Cys352–Cys357. His335 is a binding site for Zn(2+). Glu336 is an active-site residue. Residues His339 and His345 each coordinate Zn(2+). N-linked (GlcNAc...) asparagine glycosylation is found at Asn353 and Asn373. Ca(2+) is bound by residues Cys390, Asn393, Ile405, Asn408, Glu412, Glu415, and Asp418. The Disintegrin domain occupies 403–489; the sequence is PPICGNEIWE…ECPADGFHAN (87 aa). A disulfide bridge connects residues Cys461 and Cys481. The D/ECD-tripeptide signature appears at 467–469; the sequence is ECD.

It belongs to the venom metalloproteinase (M12B) family. P-III subfamily. P-IIId sub-subfamily. As to quaternary structure, heterotrimer; disulfide-linked. The heterotrimer consists of 1 heavy chain and 2 light chains (lectins): LC1 and LC2 (AC Q7T045 and AC Q696W1). Requires Zn(2+) as cofactor. Post-translationally, N-glycosylated. Contains 8.0% of hexoses, 2.5% of hexosamines and 2.5% of sialic acids. Expressed by the venom gland.

The protein resides in the secreted. It catalyses the reaction Specifically activates several components of the blood clotting system, including coagulation factor X, coagulation factor IX and protein C by cleavage of Arg-|-Xaa bonds. Has no action on insulin B chain.. With respect to regulation, calcium is required for the activity of the heterotrimer. Catalytic subunit of blood coagulation factor X-activating enzyme. Activates coagulation factor X (F10) by cleaving the Arg(234)-Ile(235) bond, activates coagulation factor IX (F9) by cleaving the Arg(226)-Val(227) bond and is also able to activate protein C (PROC). This Macrovipera lebetinus (Levantine viper) protein is Coagulation factor X-activating enzyme heavy chain.